Here is a 591-residue protein sequence, read N- to C-terminus: BRCA1-associated protein (591 aa).

S52 is subject to Phosphoserine. The span at 82-93 (DEVRDTVEEKKP) shows a compositional bias: basic and acidic residues. The disordered stretch occupies residues 82–124 (DEVRDTVEEKKPSAAPVSAQRSREQSESVNTAPESPSKQLPDQ). Residues 108 to 124 (ESVNTAPESPSKQLPDQ) are compositionally biased toward polar residues. S116 and S118 each carry phosphoserine. Residues 263 to 303 (CTVCLERMDESVNGILTTLCNHSFHSQCLQRWDDTTCPVCR) form an RING-type zinc finger. The UBP-type; degenerate zinc finger occupies 300–392 (PVCRYCQTPE…GKIVQYECEG (93 aa)). Zn(2+) is bound by residues C316, C319, C328, C331, C336, H343, H347, and H353. Positions 430 to 536 (EKDTAEEINN…EIQEQLRDVM (107 aa)) form a coiled coil. The interval 563 to 591 (IAMASAPNPPSSGAGGKLQSRKGRSKRGK) is disordered. Positions 581-591 (QSRKGRSKRGK) are enriched in basic residues.

As to quaternary structure, interacts with the nuclear localization signal of BRCA1 and with the N-terminal of KSR1. The C-terminal portion of BRCA1 interacts with DDB1. As to expression, isoform 2 is highly expressed in testis, lower levels in brain, heart, lung, stomach, colon, uterus, liver and kidney. Isoform 1 is only expressed in the testis. Isoform 2 is predominant over isoform 1 in both fetal and adult testis.

The protein localises to the cytoplasm. It carries out the reaction S-ubiquitinyl-[E2 ubiquitin-conjugating enzyme]-L-cysteine + [acceptor protein]-L-lysine = [E2 ubiquitin-conjugating enzyme]-L-cysteine + N(6)-ubiquitinyl-[acceptor protein]-L-lysine.. It functions in the pathway protein modification; protein ubiquitination. Functionally, negatively regulates MAP kinase activation by limiting the formation of Raf/MEK complexes probably by inactivation of the KSR1 scaffold protein. Also acts as a Ras responsive E3 ubiquitin ligase that, on activation of Ras, is modified by auto-polyubiquitination resulting in the release of inhibition of Raf/MEK complex formation. May also act as a cytoplasmic retention protein with a role in regulating nuclear transport. This is BRCA1-associated protein from Mus musculus (Mouse).